The sequence spans 805 residues: Acetyl-CoA decarbonylase/synthase complex subunit alpha 3 (805 aa).

[4Fe-4S] cluster-binding residues include Cys72, Cys75, Cys76, Cys78, Cys83, and Cys93. Position 116 (His116) interacts with CO. The [Ni-4Fe-4S] cluster site is built by His249, Cys277, and Cys322. 2 4Fe-4S ferredoxin-type domains span residues 407–435 (EEFKVYIDKCVKCGECMLACPEELDIPEA) and 445–474 (EYLEALHDVCIGCRRCEQVCKKEIPILNVL). Positions 416, 419, 422, 426, 454, 457, 460, and 464 each coordinate [4Fe-4S] cluster. Cys522, Cys551, and Cys586 together coordinate [Ni-4Fe-4S] cluster.

Belongs to the Ni-containing carbon monoxide dehydrogenase family. In terms of assembly, heterotetramer of two alpha and two epsilon subunits. The ACDS complex is made up of alpha, epsilon, beta, gamma and delta subunits with a probable stoichiometry of (alpha(2)epsilon(2))(4)-beta(8)-(gamma(1)delta(1))(8). [4Fe-4S] cluster serves as cofactor. Requires [Ni-4Fe-4S] cluster as cofactor.

It catalyses the reaction CO + 2 oxidized [2Fe-2S]-[ferredoxin] + H2O = 2 reduced [2Fe-2S]-[ferredoxin] + CO2 + 2 H(+). Its pathway is one-carbon metabolism; methanogenesis from acetate. Functionally, part of the ACDS complex that catalyzes the reversible cleavage of acetyl-CoA, allowing growth on acetate as sole source of carbon and energy. The alpha-epsilon subcomponent functions as a carbon monoxide dehydrogenase. This is Acetyl-CoA decarbonylase/synthase complex subunit alpha 3 from Methanosarcina acetivorans (strain ATCC 35395 / DSM 2834 / JCM 12185 / C2A).